Consider the following 276-residue polypeptide: Undecaprenyl-diphosphatase (276 aa).

The next 8 helical transmembrane spans lie at L2–I22, F43–Y63, W83–L103, L111–I131, T147–G167, Y186–L206, L224–L244, and A255–A275.

It belongs to the UppP family.

The protein localises to the cell membrane. It catalyses the reaction di-trans,octa-cis-undecaprenyl diphosphate + H2O = di-trans,octa-cis-undecaprenyl phosphate + phosphate + H(+). Functionally, catalyzes the dephosphorylation of undecaprenyl diphosphate (UPP). Confers resistance to bacitracin. This is Undecaprenyl-diphosphatase from Limosilactobacillus fermentum (strain NBRC 3956 / LMG 18251) (Lactobacillus fermentum).